The chain runs to 51 residues: Large ribosomal subunit protein eL39 (51 aa).

The protein belongs to the eukaryotic ribosomal protein eL39 family.

This is Large ribosomal subunit protein eL39 from Pyrobaculum neutrophilum (strain DSM 2338 / JCM 9278 / NBRC 100436 / V24Sta) (Thermoproteus neutrophilus).